Consider the following 366-residue polypeptide: Beta sliding clamp (366 aa).

It belongs to the beta sliding clamp family. In terms of assembly, forms a ring-shaped head-to-tail homodimer around DNA which binds and tethers DNA polymerases and other proteins to the DNA. The DNA replisome complex has a single clamp-loading complex (3 tau and 1 each of delta, delta', psi and chi subunits) which binds 3 Pol III cores (1 core on the leading strand and 2 on the lagging strand) each with a beta sliding clamp dimer. Additional proteins in the replisome are other copies of gamma, psi and chi, Ssb, DNA helicase and RNA primase.

It is found in the cytoplasm. Functionally, confers DNA tethering and processivity to DNA polymerases and other proteins. Acts as a clamp, forming a ring around DNA (a reaction catalyzed by the clamp-loading complex) which diffuses in an ATP-independent manner freely and bidirectionally along dsDNA. Initially characterized for its ability to contact the catalytic subunit of DNA polymerase III (Pol III), a complex, multichain enzyme responsible for most of the replicative synthesis in bacteria; Pol III exhibits 3'-5' exonuclease proofreading activity. The beta chain is required for initiation of replication as well as for processivity of DNA replication. This is Beta sliding clamp (dnaN) from Haemophilus influenzae (strain ATCC 51907 / DSM 11121 / KW20 / Rd).